Reading from the N-terminus, the 458-residue chain is N-acetylgalactosamine kinase (458 aa).

Residues Arg43, Glu49, His50, and Asp52 each coordinate alpha-D-galactose. Positions 143, 145, and 146 each coordinate ATP. Alpha-D-galactose is bound at residue Asp190. The Proton acceptor role is filled by Asp190. The ATP site is built by Asn233 and Lys234.

This sequence belongs to the GHMP kinase family. GalK subfamily. As to quaternary structure, monomer.

It catalyses the reaction N-acetyl-alpha-D-galactosamine + ATP = N-acetyl-alpha-D-galactosamine 1-phosphate + ADP + H(+). Its function is as follows. Acts on GalNAc. Also acts as a galactokinase when galactose is present at high concentrations. In Pongo abelii (Sumatran orangutan), this protein is N-acetylgalactosamine kinase (GALK2).